The primary structure comprises 475 residues: Aspartyl/glutamyl-tRNA(Asn/Gln) amidotransferase subunit B (475 aa).

The protein belongs to the GatB/GatE family. GatB subfamily. As to quaternary structure, heterotrimer of A, B and C subunits.

The enzyme catalyses L-glutamyl-tRNA(Gln) + L-glutamine + ATP + H2O = L-glutaminyl-tRNA(Gln) + L-glutamate + ADP + phosphate + H(+). The catalysed reaction is L-aspartyl-tRNA(Asn) + L-glutamine + ATP + H2O = L-asparaginyl-tRNA(Asn) + L-glutamate + ADP + phosphate + 2 H(+). Allows the formation of correctly charged Asn-tRNA(Asn) or Gln-tRNA(Gln) through the transamidation of misacylated Asp-tRNA(Asn) or Glu-tRNA(Gln) in organisms which lack either or both of asparaginyl-tRNA or glutaminyl-tRNA synthetases. The reaction takes place in the presence of glutamine and ATP through an activated phospho-Asp-tRNA(Asn) or phospho-Glu-tRNA(Gln). The chain is Aspartyl/glutamyl-tRNA(Asn/Gln) amidotransferase subunit B from Bacillus cereus (strain B4264).